The sequence spans 520 residues: Bifunctional dihydrofolate reductase-thymidylate synthase (520 aa).

Residues 26 to 229 (AFSIVVALDK…LEFEICKYVP (204 aa)) enclose the DHFR domain. Valine 30 serves as a coordination point for substrate. Residues alanine 32 and 38-44 (GIGDGES) each bind NADP(+). Position 52 (aspartate 52) interacts with substrate. NADP(+)-binding positions include 81-83 (RKT), 102-105 (LSSK), and 157-164 (GGAQVYAD). The substrate site is built by tyrosine 162 and threonine 180. Positions 234 to 520 (ERQYLELIDR…HPPIKMEMAV (287 aa)) are thymidylate synthase. Position 254 (arginine 254) interacts with dUMP. Cysteine 400 is a catalytic residue. DUMP-binding positions include histidine 401, 421–425 (QRSCD), asparagine 433, and 463–465 (HVY).

This sequence in the N-terminal section; belongs to the dihydrofolate reductase family. The protein in the C-terminal section; belongs to the thymidylate synthase family.

It catalyses the reaction (6S)-5,6,7,8-tetrahydrofolate + NADP(+) = 7,8-dihydrofolate + NADPH + H(+). The catalysed reaction is dUMP + (6R)-5,10-methylene-5,6,7,8-tetrahydrofolate = 7,8-dihydrofolate + dTMP. Its pathway is cofactor biosynthesis; tetrahydrofolate biosynthesis; 5,6,7,8-tetrahydrofolate from 7,8-dihydrofolate: step 1/1. In terms of biological role, bifunctional enzyme. Involved in de novo dTMP biosynthesis. Key enzyme in folate metabolism. Catalyzes an essential reaction for de novo glycine and purine synthesis, DNA precursor synthesis, and for the conversion of dUMP to dTMP. This chain is Bifunctional dihydrofolate reductase-thymidylate synthase, found in Leishmania amazonensis.